The chain runs to 161 residues: uncharacterized protein (161 aa).

This is an uncharacterized protein from Archaeoglobus fulgidus (strain ATCC 49558 / DSM 4304 / JCM 9628 / NBRC 100126 / VC-16).